We begin with the raw amino-acid sequence, 277 residues long: Thiazole synthase (277 aa).

Lys-116 serves as the catalytic Schiff-base intermediate with DXP. Residues Gly-177, 203-204 (AG), and 225-226 (NT) contribute to the 1-deoxy-D-xylulose 5-phosphate site.

It belongs to the ThiG family. In terms of assembly, homotetramer. Forms heterodimers with either ThiH or ThiS.

The protein localises to the cytoplasm. It carries out the reaction [ThiS sulfur-carrier protein]-C-terminal-Gly-aminoethanethioate + 2-iminoacetate + 1-deoxy-D-xylulose 5-phosphate = [ThiS sulfur-carrier protein]-C-terminal Gly-Gly + 2-[(2R,5Z)-2-carboxy-4-methylthiazol-5(2H)-ylidene]ethyl phosphate + 2 H2O + H(+). The protein operates within cofactor biosynthesis; thiamine diphosphate biosynthesis. In terms of biological role, catalyzes the rearrangement of 1-deoxy-D-xylulose 5-phosphate (DXP) to produce the thiazole phosphate moiety of thiamine. Sulfur is provided by the thiocarboxylate moiety of the carrier protein ThiS. In vitro, sulfur can be provided by H(2)S. This is Thiazole synthase from Thermosynechococcus vestitus (strain NIES-2133 / IAM M-273 / BP-1).